Consider the following 81-residue polypeptide: Acyl carrier protein (81 aa).

One can recognise a Carrier domain in the interval 2–80; it reads ASNEEILAGL…DAVSYIASAQ (79 aa). Position 40 is an O-(pantetheine 4'-phosphoryl)serine (S40).

This sequence belongs to the acyl carrier protein (ACP) family. 4'-phosphopantetheine is transferred from CoA to a specific serine of apo-ACP by AcpS. This modification is essential for activity because fatty acids are bound in thioester linkage to the sulfhydryl of the prosthetic group.

It is found in the cytoplasm. It participates in lipid metabolism; fatty acid biosynthesis. In terms of biological role, carrier of the growing fatty acid chain in fatty acid biosynthesis. The polypeptide is Acyl carrier protein (Renibacterium salmoninarum (strain ATCC 33209 / DSM 20767 / JCM 11484 / NBRC 15589 / NCIMB 2235)).